The sequence spans 396 residues: Phosphoglycerate kinase (396 aa).

Residues 21-23, Arg-36, 59-62, Arg-118, and Arg-151 each bind substrate; these read DLN and HFGR. Residues Lys-201, Glu-323, and 353 to 356 each bind ATP; that span reads GGDT.

This sequence belongs to the phosphoglycerate kinase family. As to quaternary structure, monomer.

The protein localises to the cytoplasm. It carries out the reaction (2R)-3-phosphoglycerate + ATP = (2R)-3-phospho-glyceroyl phosphate + ADP. It functions in the pathway carbohydrate degradation; glycolysis; pyruvate from D-glyceraldehyde 3-phosphate: step 2/5. The protein is Phosphoglycerate kinase of Brucella melitensis biotype 1 (strain ATCC 23456 / CCUG 17765 / NCTC 10094 / 16M).